Reading from the N-terminus, the 455-residue chain is Ribulose bisphosphate carboxylase large chain (455 aa).

K5 is subject to N6,N6,N6-trimethyllysine. Residues N114 and T164 each contribute to the substrate site. The active-site Proton acceptor is the K166. K168 serves as a coordination point for substrate. 3 residues coordinate Mg(2+): K192, D194, and E195. An N6-carboxylysine modification is found at K192. The active-site Proton acceptor is the H285. Substrate is bound by residues R286, H318, and S370.

The protein belongs to the RuBisCO large chain family. Type I subfamily. In terms of assembly, heterohexadecamer of 8 large chains and 8 small chains. The cofactor is Mg(2+).

It is found in the plastid. It localises to the chloroplast. It carries out the reaction 2 (2R)-3-phosphoglycerate + 2 H(+) = D-ribulose 1,5-bisphosphate + CO2 + H2O. It catalyses the reaction D-ribulose 1,5-bisphosphate + O2 = 2-phosphoglycolate + (2R)-3-phosphoglycerate + 2 H(+). RuBisCO catalyzes two reactions: the carboxylation of D-ribulose 1,5-bisphosphate, the primary event in carbon dioxide fixation, as well as the oxidative fragmentation of the pentose substrate in the photorespiration process. Both reactions occur simultaneously and in competition at the same active site. This is Ribulose bisphosphate carboxylase large chain from Tamarindus indica (Tamarind).